Here is a 269-residue protein sequence, read N- to C-terminus: Probable 3-deoxy-manno-octulosonic acid transferase (269 aa).

The protein resides in the cytoplasm. The catalysed reaction is an alpha-Kdo-(2-&gt;4)-alpha-Kdo-(2-&gt;6)-lipid IVA + CMP-3-deoxy-beta-D-manno-octulosonate = an alpha-Kdo-(2-&gt;4)-alpha-Kdo-(2-&gt;4)-alpha-Kdo-(2-&gt;6)-lipid IVA + CMP + H(+). Its pathway is bacterial outer membrane biogenesis; LPS core biosynthesis. In terms of biological role, involved in the biosynthesis of the core oligosaccharide region of lipopolysaccharide (LPS). Required for the addition of 3-deoxy-D-manno-oct-2-ulosonic acid III (KdoIII) to the KdoII residue of the inner lipopolysaccharide core. The chain is Probable 3-deoxy-manno-octulosonic acid transferase from Salmonella typhimurium (strain LT2 / SGSC1412 / ATCC 700720).